Consider the following 308-residue polypeptide: MFLLYEKEDIYMAINSKDFIPRPGFVNKQGCLPDPVEITCIQVPKVFDQCLIKECLKPTDDCEQLCKQIPNITDPAQVRCVGCCKDLKVKVNSVTKCPVSNGKPGHKKVTINFTVTFDVDVDVEINGVIHTETLNFSVNRTITASNLYCPDAIAKTIIGKECTSAEEIDQQFIKLEVVGECLSTDISKIDCDNDCCSCSCTCEDNGDKKVFLCITLGLFIIIKCEIVVQLMVPAYGYCPVPEECKCSHDPCKEFMERELPTLYPPQEMDNLFDDYDERQDERHIHDRKHIEEEEERGNLVTSSIIASN.

It is found in the spore wall. This chain is Exosporium protein A, found in Clostridium sporogenes (strain ATCC 15579).